A 263-amino-acid chain; its full sequence is Endonuclease 8 (263 aa).

Proline 2 acts as the Schiff-base intermediate with DNA in catalysis. Glutamate 3 functions as the Proton donor in the catalytic mechanism. The active-site Proton donor; for beta-elimination activity is lysine 53. Residues glutamine 70, arginine 125, and asparagine 169 each contribute to the DNA site. Residues 229 to 263 (KVFHREGESCERCGGTIERTMLSSRPFYWCPHCQS) form an FPG-type zinc finger. Arginine 253 (proton donor; for delta-elimination activity) is an active-site residue.

This sequence belongs to the FPG family. It depends on Zn(2+) as a cofactor.

The catalysed reaction is 2'-deoxyribonucleotide-(2'-deoxyribose 5'-phosphate)-2'-deoxyribonucleotide-DNA = a 3'-end 2'-deoxyribonucleotide-(2,3-dehydro-2,3-deoxyribose 5'-phosphate)-DNA + a 5'-end 5'-phospho-2'-deoxyribonucleoside-DNA + H(+). Its function is as follows. Involved in base excision repair of DNA damaged by oxidation or by mutagenic agents. Acts as a DNA glycosylase that recognizes and removes damaged bases. Has a preference for oxidized pyrimidines, such as thymine glycol, 5,6-dihydrouracil and 5,6-dihydrothymine. Has AP (apurinic/apyrimidinic) lyase activity and introduces nicks in the DNA strand. Cleaves the DNA backbone by beta-delta elimination to generate a single-strand break at the site of the removed base with both 3'- and 5'-phosphates. The polypeptide is Endonuclease 8 (Pectobacterium atrosepticum (strain SCRI 1043 / ATCC BAA-672) (Erwinia carotovora subsp. atroseptica)).